We begin with the raw amino-acid sequence, 442 residues long: 3-oxoacyl-[acyl-carrier-protein] synthase homolog (442 aa).

The Ketosynthase family 3 (KS3) domain occupies 2 to 438; sequence SRRVVITGLG…GVNTSLLFKK (437 aa). Catalysis depends on for beta-ketoacyl synthase activity residues C187, H322, and H362.

This sequence belongs to the thiolase-like superfamily. Beta-ketoacyl-ACP synthases family.

It localises to the mitochondrion. The catalysed reaction is a fatty acyl-[ACP] + malonyl-[ACP] + H(+) = a 3-oxoacyl-[ACP] + holo-[ACP] + CO2. Its function is as follows. Possibly involved in the synthesis of a specialized molecule, probably related to a fatty acid, which is essential for mitochondrial respiration. Is essential for oxygen uptake and the presence of cytochromes A and B. In Saccharomyces cerevisiae (strain ATCC 204508 / S288c) (Baker's yeast), this protein is 3-oxoacyl-[acyl-carrier-protein] synthase homolog (CEM1).